Here is a 319-residue protein sequence, read N- to C-terminus: Methionyl-tRNA formyltransferase (319 aa).

112–115 (SLLP) lines the (6S)-5,6,7,8-tetrahydrofolate pocket.

The protein belongs to the Fmt family.

The enzyme catalyses L-methionyl-tRNA(fMet) + (6R)-10-formyltetrahydrofolate = N-formyl-L-methionyl-tRNA(fMet) + (6S)-5,6,7,8-tetrahydrofolate + H(+). Attaches a formyl group to the free amino group of methionyl-tRNA(fMet). The formyl group appears to play a dual role in the initiator identity of N-formylmethionyl-tRNA by promoting its recognition by IF2 and preventing the misappropriation of this tRNA by the elongation apparatus. The protein is Methionyl-tRNA formyltransferase of Pelobacter propionicus (strain DSM 2379 / NBRC 103807 / OttBd1).